Consider the following 484-residue polypeptide: Hexokinase-2 (484 aa).

Residues 21-467 (PQLLEALKPI…SGVGAAVIAA (447 aa)) enclose the Hexokinase domain. The hexokinase small subdomain stretch occupies residues 75–208 (TGKETGSYLA…GVPIDVVALI (134 aa)). The interval 209-456 (NDTTGTLVAS…DPIIIVPAED (248 aa)) is hexokinase large subdomain.

The protein belongs to the hexokinase family. As to quaternary structure, monomer.

The protein resides in the cytoplasm. The catalysed reaction is a D-hexose + ATP = a D-hexose 6-phosphate + ADP + H(+). It carries out the reaction D-fructose + ATP = D-fructose 6-phosphate + ADP + H(+). The enzyme catalyses D-glucose + ATP = D-glucose 6-phosphate + ADP + H(+). Its pathway is carbohydrate metabolism; hexose metabolism. It functions in the pathway carbohydrate degradation; glycolysis; D-glyceraldehyde 3-phosphate and glycerone phosphate from D-glucose: step 1/4. In terms of biological role, catalyzes the phosphorylation of hexose, such as D-glucose and D-fructose, to hexose 6-phosphate (D-glucose 6-phosphate and D-fructose 6-phosphate, respectively). Mediates the initial step of glycolysis by catalyzing phosphorylation of D-glucose to D-glucose 6-phosphate. This is Hexokinase-2 (HXK2) from Candida albicans (strain SC5314 / ATCC MYA-2876) (Yeast).